Here is a 79-residue protein sequence, read N- to C-terminus: Putative antitoxin VapB1 (79 aa).

In terms of biological role, antitoxin component of a possible type II toxin-antitoxin (TA) system. The cognate toxin is VapC1. This chain is Putative antitoxin VapB1 (vapB1), found in Mycobacterium tuberculosis (strain ATCC 25618 / H37Rv).